The following is a 242-amino-acid chain: tRNA (guanine-N(1)-)-methyltransferase (242 aa).

S-adenosyl-L-methionine-binding positions include Gly-108 and 127-132; that span reads IGDYVL.

This sequence belongs to the RNA methyltransferase TrmD family. Homodimer.

Its subcellular location is the cytoplasm. It catalyses the reaction guanosine(37) in tRNA + S-adenosyl-L-methionine = N(1)-methylguanosine(37) in tRNA + S-adenosyl-L-homocysteine + H(+). Its function is as follows. Specifically methylates guanosine-37 in various tRNAs. In Lactobacillus acidophilus (strain ATCC 700396 / NCK56 / N2 / NCFM), this protein is tRNA (guanine-N(1)-)-methyltransferase.